Consider the following 1499-residue polypeptide: Pleiotropic ABC efflux transporter of multiple drugs CDR1 (1499 aa).

The segment covering 1–11 has biased composition (basic and acidic residues); it reads MSLASDKKDAD. The segment at 1–29 is disordered; that stretch reads MSLASDKKDADVASTTTTAQDDDNLSTYH. N-linked (GlcNAc...) asparagine glycans are attached at residues asparagine 24, asparagine 96, and asparagine 99. One can recognise an ABC transporter 1 domain in the interval 146-399; it reads VYNTVVPSTA…FQKMGYVSPE (254 aa). Serine 307 carries the post-translational modification Phosphoserine. Asparagine 323 carries an N-linked (GlcNAc...) asparagine glycan. Phosphoserine is present on serine 484. A helical transmembrane segment spans residues 510-530; that stretch reads GVTLFMVIGNSSMAFILGSMF. The N-linked (GlcNAc...) asparagine glycan is linked to asparagine 537. 5 helical membrane passes run 548 to 568, 597 to 617, 622 to 642, 654 to 674, and 763 to 783; these read AMFF…FSLF, VPAK…LVNF, GVFF…SHLF, AAMV…GFAI, and GFGI…ILCE. Asparagine 813 carries an N-linked (GlcNAc...) asparagine glycan. The ABC transporter 2 domain occupies 857–1099; it reads FHWRNLCYDV…TMIDYFESHG (243 aa). Residue 893–900 participates in ATP binding; sequence GASGAGKT. Residue asparagine 1159 is glycosylated (N-linked (GlcNAc...) asparagine). A run of 3 helical transmembrane segments spans residues 1193-1213, 1228-1248, and 1278-1298; these read YLWS…FTFF, AVFM…PSFV, and IPWN…AIGF. N-linked (GlcNAc...) asparagine glycosylation occurs at asparagine 1301. 2 consecutive transmembrane segments (helical) span residues 1314–1334 and 1342–1362; these read LFWL…LFCI and AAAN…GVLV. A glycan (N-linked (GlcNAc...) asparagine) is linked at asparagine 1412. Residues 1466–1486 traverse the membrane as a helical segment; that stretch reads WGIFICYIAFNYIAGIFLYWL.

It belongs to the ABC transporter superfamily. In terms of processing, phosphorylated at Ser-307 and Ser-484. Ser-307 and Ser-484 are dephosphorylated on glucose depletion and independently rephosphorylated during glucose exposure or under stress.

It localises to the cell membrane. Its activity is regulated as follows. Inhibited by clorgyline. Inhibited by RC21v3, a 4-methoxy-2,3,6-trimethylbenzenesulphonyl derivative of the D-octapeptide D-FFKWQRRR, via the interaction with the ectodomain. FK506, enniatin, milbemycin alpha-11, and milbemycin beta-9 also inhibit CDR1 activity. Inhibited by milbemycin A3/A4 oxim derivatives. Functionally, pleiotropic ABC efflux transporter that transports and confers resistance to structurally and functionally unrelated compounds including rhodamine 6G, Nile red, caspofungin, cycloheximide, or azoles such as fluconazole, itraconazole, ketoconazole, posaconazole, voriconazole, and isavuconazole. Chlorbromuron, itraconazole, yohimbine, ketoconazole, miconazole, clotrimazole, DE-11, tamoxifen, quinidine, verapamil can compete for rhodamine 6G's binding site(s) while compounds such as propanil, chloramphenicol, benomyl, voriconazole, tritylimidazole, ketoconazole, miconazole, tamoxifen, gefitinib shared binding site(s) with fluconazole. Nile red mediated efflux appears to be relatively more specific since only five compounds such as ZW3-12, rhodamine 123, miconazole, clotrimazole, and itraconazole can inhibit its accumulation. Does not use as substrates 4-nitroquinoline 1-oxide (4-NQO) and disulfiram. Does not play a role in the azole resistance in mature biofilms. The chain is Pleiotropic ABC efflux transporter of multiple drugs CDR1 from Candida glabrata (strain ATCC 2001 / BCRC 20586 / JCM 3761 / NBRC 0622 / NRRL Y-65 / CBS 138) (Yeast).